The chain runs to 354 residues: Inactive ADP-ribosyltransferase ARH2 (354 aa).

Position 27 is a phosphoserine (Ser-27).

The protein belongs to the ADP-ribosylglycohydrolase family.

The protein localises to the cytoplasm. It localises to the myofibril. The protein resides in the sarcomere. In terms of biological role, required for myofibril assembly and outgrowth of the cardiac chambers in the developing heart. Appears to be catalytically inactive, showing no activity against O-acetyl-ADP-ribose. This Pongo abelii (Sumatran orangutan) protein is Inactive ADP-ribosyltransferase ARH2 (ADPRHL1).